A 424-amino-acid polypeptide reads, in one-letter code: Serine--tRNA ligase (424 aa).

Thr230–Glu232 contacts L-serine. Arg261 to Glu263 is a binding site for ATP. An L-serine-binding site is contributed by Glu284. Glu348 to Ser351 provides a ligand contact to ATP. An L-serine-binding site is contributed by Ser384.

This sequence belongs to the class-II aminoacyl-tRNA synthetase family. Type-1 seryl-tRNA synthetase subfamily. In terms of assembly, homodimer. The tRNA molecule binds across the dimer.

The protein localises to the cytoplasm. The enzyme catalyses tRNA(Ser) + L-serine + ATP = L-seryl-tRNA(Ser) + AMP + diphosphate + H(+). It carries out the reaction tRNA(Sec) + L-serine + ATP = L-seryl-tRNA(Sec) + AMP + diphosphate + H(+). It participates in aminoacyl-tRNA biosynthesis; selenocysteinyl-tRNA(Sec) biosynthesis; L-seryl-tRNA(Sec) from L-serine and tRNA(Sec): step 1/1. In terms of biological role, catalyzes the attachment of serine to tRNA(Ser). Is also able to aminoacylate tRNA(Sec) with serine, to form the misacylated tRNA L-seryl-tRNA(Sec), which will be further converted into selenocysteinyl-tRNA(Sec). This chain is Serine--tRNA ligase, found in Desulforamulus reducens (strain ATCC BAA-1160 / DSM 100696 / MI-1) (Desulfotomaculum reducens).